The sequence spans 266 residues: MEYLRFILYGLIQGLTEFLPISSTAHLKIISIFLGIDDPGSSLSATIQLGSVLAIVWYFRNDIFNFRGQSSKNILYYFLHERLLRSIFIGTIPIVLLGGSVKLFVPNFIDNVLRSNLSIALVSIVMAFFMYLADSSKRGSIDIKNHNYSDSFLIGFFQALAIFPGVSRSGITISSALISGWERRDAAKFSFLLGMPAISLAAIVEFIFSFNEFFSIGFLPLLVGLMTTFLSSLLAIDFLLRYFSSNGLKIFIIYRVIFGVVILLNL.

7 helical membrane-spanning segments follow: residues 39–59 (PGSS…VWYF), 86–106 (SIFI…LFVP), 112–132 (VLRS…FMYL), 153–173 (LIGF…GITI), 189–209 (FSFL…FIFS), 216–236 (IGFL…LLAI), and 246–266 (NGLK…LLNL).

This sequence belongs to the UppP family.

It is found in the cell inner membrane. The enzyme catalyses di-trans,octa-cis-undecaprenyl diphosphate + H2O = di-trans,octa-cis-undecaprenyl phosphate + phosphate + H(+). Functionally, catalyzes the dephosphorylation of undecaprenyl diphosphate (UPP). Confers resistance to bacitracin. The sequence is that of Undecaprenyl-diphosphatase from Prochlorococcus marinus (strain MIT 9215).